We begin with the raw amino-acid sequence, 277 residues long: Myelin proteolipid protein (277 aa).

At 2-9 the chain is on the cytoplasmic side; that stretch reads GLLECCAR. Residues Cys6, Cys7, and Cys10 are each lipidated (S-palmitoyl cysteine). A helical membrane pass occupies residues 10 to 36; it reads CLVGAPFASLVATGLCFFGVALFCGCG. Topologically, residues 37–63 are extracellular; sequence HEALTGTEKLIETYFSKNYQDYEYLIN. Residues 64–88 traverse the membrane as a helical segment; sequence VIHAFQYVIYGTASFFFLYGALLLA. Topologically, residues 89–151 are cytoplasmic; sequence EGFYTTGAVR…LGKWLGHPDK (63 aa). A lipid anchor (S-palmitoyl cysteine) is attached at Cys109. Ser114 carries the post-translational modification Phosphoserine. Thr116 and Thr118 each carry phosphothreonine. S-palmitoyl cysteine attachment occurs at residues Cys139 and Cys141. Residues 152-177 form a helical membrane-spanning segment; sequence FVGITYALTVVWLLVFACSAVPVYIY. The Extracellular portion of the chain corresponds to 178 to 233; it reads FNTWTTCQSIAFPSKTSASIGSLCADARMYGVLPWNAFPGKVCGSNLLSICKTAEF. 2 cysteine pairs are disulfide-bonded: Cys184–Cys228 and Cys201–Cys220. Ser199 carries O-palmitoyl serine lipidation. Residues 234–260 form a helical membrane-spanning segment; the sequence is QMTFHLFIAAFVGAAATLVSLLTFMIA. Topologically, residues 261–277 are cytoplasmic; sequence ATYNFAVLKLMGRGTKF.

Belongs to the myelin proteolipid protein family. As to quaternary structure, interacts with MAL.

It is found in the cell membrane. The protein localises to the myelin membrane. Its function is as follows. This is the major myelin protein from the central nervous system. It plays an important role in the formation or maintenance of the multilamellar structure of myelin. The sequence is that of Myelin proteolipid protein (Plp1) from Mus musculus (Mouse).